The following is a 725-amino-acid chain: Ribosomal RNA large subunit methyltransferase K/L (725 aa).

One can recognise a THUMP domain in the interval 45–156; that stretch reads SGYRACLWSR…RGRLSLGIDL (112 aa).

It belongs to the methyltransferase superfamily. RlmKL family.

The protein resides in the cytoplasm. The catalysed reaction is guanosine(2445) in 23S rRNA + S-adenosyl-L-methionine = N(2)-methylguanosine(2445) in 23S rRNA + S-adenosyl-L-homocysteine + H(+). It carries out the reaction guanosine(2069) in 23S rRNA + S-adenosyl-L-methionine = N(2)-methylguanosine(2069) in 23S rRNA + S-adenosyl-L-homocysteine + H(+). Specifically methylates the guanine in position 2445 (m2G2445) and the guanine in position 2069 (m7G2069) of 23S rRNA. In Marinobacter nauticus (strain ATCC 700491 / DSM 11845 / VT8) (Marinobacter aquaeolei), this protein is Ribosomal RNA large subunit methyltransferase K/L.